Here is a 261-residue protein sequence, read N- to C-terminus: Cytochrome c oxidase subunit 3 (261 aa).

The next 6 membrane-spanning stretches (helical) occupy residues 31–51 (LVLWFHTGNIILLFTGLLLLI), 82–102 (PMILFITSEVCFFFAFFWAFF), 126–146 (PFLVPLLNTAVLLSSGVTITW), 159–179 (AIQALFLTVVLGIYFTILQAW), 197–217 (FFVATGFHGLHVIIGTTFLLV), and 239–259 (AWYWHFVDVVWLFLYVCIYWW).

Belongs to the cytochrome c oxidase subunit 3 family. In terms of assembly, component of the cytochrome c oxidase (complex IV, CIV), a multisubunit enzyme composed of a catalytic core of 3 subunits and several supernumerary subunits. The complex exists as a monomer or a dimer and forms supercomplexes (SCs) in the inner mitochondrial membrane with ubiquinol-cytochrome c oxidoreductase (cytochrome b-c1 complex, complex III, CIII).

The protein localises to the mitochondrion inner membrane. The catalysed reaction is 4 Fe(II)-[cytochrome c] + O2 + 8 H(+)(in) = 4 Fe(III)-[cytochrome c] + 2 H2O + 4 H(+)(out). Its function is as follows. Component of the cytochrome c oxidase, the last enzyme in the mitochondrial electron transport chain which drives oxidative phosphorylation. The respiratory chain contains 3 multisubunit complexes succinate dehydrogenase (complex II, CII), ubiquinol-cytochrome c oxidoreductase (cytochrome b-c1 complex, complex III, CIII) and cytochrome c oxidase (complex IV, CIV), that cooperate to transfer electrons derived from NADH and succinate to molecular oxygen, creating an electrochemical gradient over the inner membrane that drives transmembrane transport and the ATP synthase. Cytochrome c oxidase is the component of the respiratory chain that catalyzes the reduction of oxygen to water. Electrons originating from reduced cytochrome c in the intermembrane space (IMS) are transferred via the dinuclear copper A center (CU(A)) of subunit 2 and heme A of subunit 1 to the active site in subunit 1, a binuclear center (BNC) formed by heme A3 and copper B (CU(B)). The BNC reduces molecular oxygen to 2 water molecules using 4 electrons from cytochrome c in the IMS and 4 protons from the mitochondrial matrix. This Paracentrotus lividus (Common sea urchin) protein is Cytochrome c oxidase subunit 3 (COIII).